Reading from the N-terminus, the 152-residue chain is MVKAVAVLGSSEGVTGTIFFTQEGNGPTTVTGSLAGLKPGLHGFHVHALGDTTNGCLSTGAHFNPNNNEHGAPEDENRHAGDLGNVNVGDDGTVSFSITDSQIPLTGPNSIIGRAVVVHADSDDLGKGGHELSKTTGNAGGRVACGIIGLQG.

Residues His45, His47, and His62 each coordinate Cu cation. The cysteines at positions 56 and 145 are disulfide-linked. Zn(2+) contacts are provided by His62, His70, His79, and Asp82. Positions 62-82 are disordered; it reads HFNPNNNEHGAPEDENRHAGD. Basic and acidic residues predominate over residues 71 to 81; the sequence is GAPEDENRHAG. His119 is a binding site for Cu cation.

The protein belongs to the Cu-Zn superoxide dismutase family. Homodimer. Cu cation is required as a cofactor. Requires Zn(2+) as cofactor.

It is found in the cytoplasm. It carries out the reaction 2 superoxide + 2 H(+) = H2O2 + O2. In terms of biological role, destroys radicals which are normally produced within the cells and which are toxic to biological systems. This chain is Superoxide dismutase [Cu-Zn] (SOD1), found in Glycine max (Soybean).